Consider the following 574-residue polypeptide: Cholinesterase (574 aa).

A glycan (N-linked (GlcNAc...) asparagine) is linked at asparagine 57. The cysteines at positions 65 and 92 are disulfide-linked. Asparagine 106 carries N-linked (GlcNAc...) asparagine glycosylation. 116 to 117 (GG) contributes to the substrate binding site. The active-site Acyl-ester intermediate is the serine 198. At serine 198 the chain carries Phosphoserine. N-linked (GlcNAc...) asparagine glycans are attached at residues asparagine 241 and asparagine 256. Cysteines 252 and 263 form a disulfide. The active-site Charge relay system is the glutamate 325. Residue asparagine 341 is glycosylated (N-linked (GlcNAc...) asparagine). The cysteines at positions 400 and 519 are disulfide-linked. Catalysis depends on histidine 438, which acts as the Charge relay system. Residues asparagine 455, asparagine 481, and asparagine 486 are each glycosylated (N-linked (GlcNAc...) asparagine).

This sequence belongs to the type-B carboxylesterase/lipase family. Homotetramer; disulfide-linked. Dimer of dimers. Detected in blood plasma (at protein level). Present in most cells except erythrocytes.

Its subcellular location is the secreted. It carries out the reaction an acylcholine + H2O = a carboxylate + choline + H(+). In terms of biological role, esterase with broad substrate specificity. Contributes to the inactivation of the neurotransmitter acetylcholine. Can degrade neurotoxic organophosphate esters. The polypeptide is Cholinesterase (BCHE) (Equus caballus (Horse)).